The primary structure comprises 431 residues: Glutamyl-tRNA reductase (431 aa).

Residues 49–52 (TCNR), serine 109, 114–116 (EGQ), and glutamine 120 contribute to the substrate site. The active-site Nucleophile is the cysteine 50. 189–194 (GAGKMA) is an NADP(+) binding site.

This sequence belongs to the glutamyl-tRNA reductase family. Homodimer.

The enzyme catalyses (S)-4-amino-5-oxopentanoate + tRNA(Glu) + NADP(+) = L-glutamyl-tRNA(Glu) + NADPH + H(+). The protein operates within porphyrin-containing compound metabolism; protoporphyrin-IX biosynthesis; 5-aminolevulinate from L-glutamyl-tRNA(Glu): step 1/2. Its pathway is porphyrin-containing compound metabolism; chlorophyll biosynthesis. Its function is as follows. Catalyzes the NADPH-dependent reduction of glutamyl-tRNA(Glu) to glutamate 1-semialdehyde (GSA). In Synechococcus sp. (strain JA-3-3Ab) (Cyanobacteria bacterium Yellowstone A-Prime), this protein is Glutamyl-tRNA reductase.